The sequence spans 125 residues: Aspartate 1-decarboxylase 2 (125 aa).

The active-site Schiff-base intermediate with substrate; via pyruvic acid is Ser-25. The residue at position 25 (Ser-25) is a Pyruvic acid (Ser). Thr-57 is a binding site for substrate. The active-site Proton donor is Tyr-58. A substrate-binding site is contributed by Gly-73–Ala-75.

This sequence belongs to the PanD family. As to quaternary structure, heterooctamer of four alpha and four beta subunits. The cofactor is pyruvate. In terms of processing, is synthesized initially as an inactive proenzyme, which is activated by self-cleavage at a specific serine bond to produce a beta-subunit with a hydroxyl group at its C-terminus and an alpha-subunit with a pyruvoyl group at its N-terminus.

The protein resides in the cytoplasm. It carries out the reaction L-aspartate + H(+) = beta-alanine + CO2. The protein operates within cofactor biosynthesis; (R)-pantothenate biosynthesis; beta-alanine from L-aspartate: step 1/1. Functionally, catalyzes the pyruvoyl-dependent decarboxylation of aspartate to produce beta-alanine. This Gloeobacter violaceus (strain ATCC 29082 / PCC 7421) protein is Aspartate 1-decarboxylase 2.